Consider the following 288-residue polypeptide: Ankyrin repeat and SOCS box protein 8 (288 aa).

The residue at position 17 (serine 17) is a Phosphoserine. ANK repeat units follow at residues 52–81 (GTLK…EVNA), 85–113 (YNRT…NPNA), 117–146 (NRDT…SVNA), and 150–179 (NNDT…EVRV). In terms of domain architecture, SOCS box spans 235–288 (QLCEKLTVLCSAPGTLKTLARYAVRRSLGLQYLPDAVKGLPLPVSLKDYLLLLE).

The protein belongs to the ankyrin SOCS box (ASB) family. Interacts with TBK1; this interaction promotes TBK1 proteasomal degradation. In terms of processing, phosphorylated by TBK1.

It is found in the cytoplasm. It functions in the pathway protein modification; protein ubiquitination. May be a substrate-recognition component of a SCF-like ECS (Elongin-Cullin-SOCS-box protein) E3 ubiquitin-protein ligase complex which mediates the ubiquitination and subsequent proteasomal degradation of target proteins. Inhibits IFN-beta production through the IRF3 signaling pathway by targeting TBK1 via 'Lys-48'-linked ubiquitination, leading to its proteasomal degradation. This Mus musculus (Mouse) protein is Ankyrin repeat and SOCS box protein 8 (Asb8).